A 242-amino-acid chain; its full sequence is Biosynthetic peptidoglycan transglycosylase (242 aa).

A helical membrane pass occupies residues 19-39 (LMVVLAIFWGGGIALFSVAPV).

The protein belongs to the glycosyltransferase 51 family.

It is found in the cell inner membrane. The enzyme catalyses [GlcNAc-(1-&gt;4)-Mur2Ac(oyl-L-Ala-gamma-D-Glu-L-Lys-D-Ala-D-Ala)](n)-di-trans,octa-cis-undecaprenyl diphosphate + beta-D-GlcNAc-(1-&gt;4)-Mur2Ac(oyl-L-Ala-gamma-D-Glu-L-Lys-D-Ala-D-Ala)-di-trans,octa-cis-undecaprenyl diphosphate = [GlcNAc-(1-&gt;4)-Mur2Ac(oyl-L-Ala-gamma-D-Glu-L-Lys-D-Ala-D-Ala)](n+1)-di-trans,octa-cis-undecaprenyl diphosphate + di-trans,octa-cis-undecaprenyl diphosphate + H(+). The protein operates within cell wall biogenesis; peptidoglycan biosynthesis. In terms of biological role, peptidoglycan polymerase that catalyzes glycan chain elongation from lipid-linked precursors. In Escherichia coli O127:H6 (strain E2348/69 / EPEC), this protein is Biosynthetic peptidoglycan transglycosylase.